The sequence spans 172 residues: Peptidyl-prolyl cis-trans isomerase (172 aa).

Residues 10-168 enclose the PPIase cyclophilin-type domain; it reads YFDVYANEES…YRIEIRDCGV (159 aa).

It belongs to the cyclophilin-type PPIase family.

The protein localises to the cytoplasm. It carries out the reaction [protein]-peptidylproline (omega=180) = [protein]-peptidylproline (omega=0). In terms of biological role, PPIases accelerate the folding of proteins. They catalyze the cis-trans isomerization of proline imidic peptide bonds in oligopeptides. This Encephalitozoon cuniculi (strain GB-M1) (Microsporidian parasite) protein is Peptidyl-prolyl cis-trans isomerase (CPR1).